The chain runs to 581 residues: Prolactin receptor (581 aa).

A signal peptide spans 1–24; it reads MKENAASRVLFILLLFLFASLLNG. The Extracellular portion of the chain corresponds to 25–237; sequence QSPPEKPKLI…NDFPVKDTSM (213 aa). Fibronectin type-III domains follow at residues 27 to 127 and 129 to 229; these read PPEK…IVEP and PPVN…IPND. A disulfide bridge links Cys36 with Cys46. Residue Asn59 is glycosylated (N-linked (GlcNAc...) asparagine). A disulfide bridge links Cys75 with Cys86. N-linked (GlcNAc...) asparagine glycosylation is present at Asn132. Asp211 and His212 together coordinate Zn(2+). Residues 215 to 219 carry the WSXWS motif motif; the sequence is WSEWS. Residues 238 to 258 form a helical membrane-spanning segment; sequence WIFVGVLSAVICLIMVWAVAL. At 259–581 the chain is on the cytoplasmic side; the sequence is KGYSMVTCIL…SAKKAPPALP (323 aa). The short motif at 267–275 is the Box 1 motif element; the sequence is ILPPVPGPK. Composition is skewed to basic and acidic residues over residues 323 to 349 and 375 to 388; these read QHLM…DTDS and HIPE…DPET. Disordered stretches follow at residues 323-388 and 462-492; these read QHLM…DPET and FKPS…PDQD.

This sequence belongs to the type I cytokine receptor family. Type 1 subfamily. In terms of assembly, interacts with SMARCA1. Interacts with NEK3 and VAV2 and this interaction is prolactin-dependent. As to expression, expressed in all tissues examined; liver, pituitary, adrenal gland, ovary and fetal liver.

The protein localises to the membrane. Functionally, this is a receptor for the anterior pituitary hormone prolactin. The chain is Prolactin receptor (PRLR) from Ovis aries (Sheep).